The primary structure comprises 490 residues: Probable cytosol aminopeptidase (490 aa).

Mn(2+) is bound by residues K260 and D265. K272 is an active-site residue. Residues D284, D343, and E345 each coordinate Mn(2+). The active site involves R347.

The protein belongs to the peptidase M17 family. Mn(2+) serves as cofactor.

It localises to the cytoplasm. It catalyses the reaction Release of an N-terminal amino acid, Xaa-|-Yaa-, in which Xaa is preferably Leu, but may be other amino acids including Pro although not Arg or Lys, and Yaa may be Pro. Amino acid amides and methyl esters are also readily hydrolyzed, but rates on arylamides are exceedingly low.. The enzyme catalyses Release of an N-terminal amino acid, preferentially leucine, but not glutamic or aspartic acids.. Its function is as follows. Presumably involved in the processing and regular turnover of intracellular proteins. Catalyzes the removal of unsubstituted N-terminal amino acids from various peptides. This chain is Probable cytosol aminopeptidase, found in Gloeothece citriformis (strain PCC 7424) (Cyanothece sp. (strain PCC 7424)).